The primary structure comprises 392 residues: Formate-dependent phosphoribosylglycinamide formyltransferase (392 aa).

N(1)-(5-phospho-beta-D-ribosyl)glycinamide is bound by residues Glu-20–Leu-21 and Glu-80. ATP contacts are provided by residues Arg-112, Lys-153, Ser-158–Gln-163, Glu-193–Ile-196, and Glu-201. The region spanning Arg-117–Leu-306 is the ATP-grasp domain. 2 residues coordinate Mg(2+): Glu-265 and Glu-277. Residues Asp-284, Lys-354, and Arg-361 to Arg-362 each bind N(1)-(5-phospho-beta-D-ribosyl)glycinamide.

It belongs to the PurK/PurT family. In terms of assembly, homodimer.

The catalysed reaction is N(1)-(5-phospho-beta-D-ribosyl)glycinamide + formate + ATP = N(2)-formyl-N(1)-(5-phospho-beta-D-ribosyl)glycinamide + ADP + phosphate + H(+). It participates in purine metabolism; IMP biosynthesis via de novo pathway; N(2)-formyl-N(1)-(5-phospho-D-ribosyl)glycinamide from N(1)-(5-phospho-D-ribosyl)glycinamide (formate route): step 1/1. Involved in the de novo purine biosynthesis. Catalyzes the transfer of formate to 5-phospho-ribosyl-glycinamide (GAR), producing 5-phospho-ribosyl-N-formylglycinamide (FGAR). Formate is provided by PurU via hydrolysis of 10-formyl-tetrahydrofolate. This chain is Formate-dependent phosphoribosylglycinamide formyltransferase, found in Geobacter metallireducens (strain ATCC 53774 / DSM 7210 / GS-15).